A 245-amino-acid polypeptide reads, in one-letter code: MFKATIDAYLLKDSIETLSVLVDEARFRISPEGVVVRAVDPANVAMVSFDLTPEAFDDFEANDCELGLDLSRINDILGVADRDDKVQMELDEESKKLKIQIGGFSYTISLLDPSTIRAEPRIPQLELPAEIVLNGKDLQKAVKAAEKISDHMLLGVEGESFFMEAEGDTDRVKLTMTRDQLIDIKPSQVRSLFSLDYLSDIIKPASKSNEISLHLGNDFPIKINFSIANGKGTIGYLLAPRIESD.

The protein belongs to the PCNA family. In terms of assembly, homotrimer. The subunits circularize to form a toroid; DNA passes through its center. Replication factor C (RFC) is required to load the toroid on the DNA.

In terms of biological role, sliding clamp subunit that acts as a moving platform for DNA processing. Responsible for tethering the catalytic subunit of DNA polymerase and other proteins to DNA during high-speed replication. The chain is DNA polymerase sliding clamp from Methanococcoides burtonii (strain DSM 6242 / NBRC 107633 / OCM 468 / ACE-M).